The following is a 278-amino-acid chain: Protein MGF 505-3R (278 aa).

Belongs to the asfivirus MGF 505 family.

Plays a role in virus cell tropism, and may be required for efficient virus replication in macrophages. This African swine fever virus (isolate Tick/Malawi/Lil 20-1/1983) (ASFV) protein is Protein MGF 505-3R.